The chain runs to 144 residues: Glutamyl-tRNA(Gln) amidotransferase subunit C, mitochondrial (144 aa).

The N-terminal 17 residues, 1-17 (MFRRSVSFVRSHVLRSF), are a transit peptide targeting the mitochondrion.

This sequence belongs to the GatC family. Subunit of the heterotrimeric GatCAB amidotransferase (AdT) complex, composed of A, B and C subunits.

The protein resides in the mitochondrion. It carries out the reaction L-glutamyl-tRNA(Gln) + L-glutamine + ATP + H2O = L-glutaminyl-tRNA(Gln) + L-glutamate + ADP + phosphate + H(+). Allows the formation of correctly charged Gln-tRNA(Gln) through the transamidation of misacylated Glu-tRNA(Gln) in the mitochondria. The reaction takes place in the presence of glutamine and ATP through an activated gamma-phospho-Glu-tRNA(Gln). The polypeptide is Glutamyl-tRNA(Gln) amidotransferase subunit C, mitochondrial (Ixodes scapularis (Black-legged tick)).